Here is a 135-residue protein sequence, read N- to C-terminus: Large ribosomal subunit protein uL16c (135 aa).

This sequence belongs to the universal ribosomal protein uL16 family. Part of the 50S ribosomal subunit.

It localises to the plastid. The protein localises to the chloroplast. This chain is Large ribosomal subunit protein uL16c, found in Aethionema cordifolium (Lebanon stonecress).